The primary structure comprises 143 residues: Large ribosomal subunit protein uL15 (143 aa).

The interval 1–47 (MKLHELTPSEGSRFSRRRIGRGDSSGQGKTSGRGQKGQKARGKVRVG) is disordered. Over residues 23 to 35 (DSSGQGKTSGRGQ) the composition is skewed to gly residues.

The protein belongs to the universal ribosomal protein uL15 family. Part of the 50S ribosomal subunit.

Functionally, binds to the 23S rRNA. The sequence is that of Large ribosomal subunit protein uL15 from Lactiplantibacillus plantarum (strain ATCC BAA-793 / NCIMB 8826 / WCFS1) (Lactobacillus plantarum).